A 418-amino-acid polypeptide reads, in one-letter code: Glutamyl-tRNA reductase (418 aa).

Residues 49–52 (TCNR), Ser109, 114–116 (EPQ), and Gln120 each bind substrate. Residue Cys50 is the Nucleophile of the active site. Residue 189 to 194 (GAGETI) participates in NADP(+) binding.

It belongs to the glutamyl-tRNA reductase family. Homodimer.

The enzyme catalyses (S)-4-amino-5-oxopentanoate + tRNA(Glu) + NADP(+) = L-glutamyl-tRNA(Glu) + NADPH + H(+). It participates in porphyrin-containing compound metabolism; protoporphyrin-IX biosynthesis; 5-aminolevulinate from L-glutamyl-tRNA(Glu): step 1/2. In terms of biological role, catalyzes the NADPH-dependent reduction of glutamyl-tRNA(Glu) to glutamate 1-semialdehyde (GSA). The sequence is that of Glutamyl-tRNA reductase from Erwinia tasmaniensis (strain DSM 17950 / CFBP 7177 / CIP 109463 / NCPPB 4357 / Et1/99).